We begin with the raw amino-acid sequence, 182 residues long: Crossover junction endodeoxyribonuclease RuvC (182 aa).

Residues Asp7, Glu69, and Asp141 contribute to the active site. The Mg(2+) site is built by Asp7, Glu69, and Asp141.

The protein belongs to the RuvC family. As to quaternary structure, homodimer which binds Holliday junction (HJ) DNA. The HJ becomes 2-fold symmetrical on binding to RuvC with unstacked arms; it has a different conformation from HJ DNA in complex with RuvA. In the full resolvosome a probable DNA-RuvA(4)-RuvB(12)-RuvC(2) complex forms which resolves the HJ. Requires Mg(2+) as cofactor.

It localises to the cytoplasm. It carries out the reaction Endonucleolytic cleavage at a junction such as a reciprocal single-stranded crossover between two homologous DNA duplexes (Holliday junction).. In terms of biological role, the RuvA-RuvB-RuvC complex processes Holliday junction (HJ) DNA during genetic recombination and DNA repair. Endonuclease that resolves HJ intermediates. Cleaves cruciform DNA by making single-stranded nicks across the HJ at symmetrical positions within the homologous arms, yielding a 5'-phosphate and a 3'-hydroxyl group; requires a central core of homology in the junction. The consensus cleavage sequence is 5'-(A/T)TT(C/G)-3'. Cleavage occurs on the 3'-side of the TT dinucleotide at the point of strand exchange. HJ branch migration catalyzed by RuvA-RuvB allows RuvC to scan DNA until it finds its consensus sequence, where it cleaves and resolves the cruciform DNA. In Variovorax paradoxus (strain S110), this protein is Crossover junction endodeoxyribonuclease RuvC.